The following is a 301-amino-acid chain: MNQIEKTGELSASRFTVRDFTELVKIGIVNSNTITAFTGMWLAFQLNGISFIQNVDVIFFTIVGSALIVAASGAFNNVIDRDIDGIMERTKNRPTMTGKISGKRALMVALVLGVVGTIMLFMTTWQAGVLGVIGVFLYVVVYSLYAKRKLVSNTVIGSFSGAVPPLIGWFAVEPTFSIVPIMLFLVMFCWQPPHFYAIAIKRKEEYAAAGIPMLPVVKGIERTKKSMFFWVILLTILPFFMFDLGIVYVILATLLNIGWLALSIYGFKMEDSIKWAKWMFVYSLNYMTILFVAMVVISIFL.

9 helical membrane passes run 20-42 (FTEL…GMWL), 55-75 (VDVI…SGAF), 105-125 (ALMV…MTTW), 126-146 (QAGV…SLYA), 150-172 (LVSN…WFAV), 176-198 (FSIV…FYAI), 227-247 (MFFW…LGIV), 249-269 (VILA…GFKM), and 280-300 (FVYS…ISIF).

Belongs to the UbiA prenyltransferase family. Protoheme IX farnesyltransferase subfamily. In terms of assembly, interacts with CtaA.

Its subcellular location is the cell membrane. It carries out the reaction heme b + (2E,6E)-farnesyl diphosphate + H2O = Fe(II)-heme o + diphosphate. The protein operates within porphyrin-containing compound metabolism; heme O biosynthesis; heme O from protoheme: step 1/1. Converts heme B (protoheme IX) to heme O by substitution of the vinyl group on carbon 2 of heme B porphyrin ring with a hydroxyethyl farnesyl side group. This is Protoheme IX farnesyltransferase from Listeria monocytogenes serovar 1/2a (strain ATCC BAA-679 / EGD-e).